The primary structure comprises 34 residues: GLIFNLDTGELCLQSAQCKSECCQEDSGLSLAXC.

2 disulfide bridges follow: Cys-12–Cys-23 and Cys-18–Cys-34.

This sequence belongs to the colipase family. Forms a 1:1 stoichiometric complex with pancreatic lipase. Expressed by the pancreas.

Its subcellular location is the secreted. Its function is as follows. Colipase is a cofactor of pancreatic lipase. It allows the lipase to anchor itself to the lipid-water interface. Without colipase the enzyme is washed off by bile salts, which have an inhibitory effect on the lipase. In Gallus gallus (Chicken), this protein is Colipase (CLPS).